Consider the following 244-residue polypeptide: Probable fimbrial assembly protein FimC, serogroup H1 (244 aa).

The protein is Probable fimbrial assembly protein FimC, serogroup H1 (fimC) of Dichelobacter nodosus (Bacteroides nodosus).